A 404-amino-acid chain; its full sequence is Type II restriction enzyme EcoRII (404 aa).

Residue Tyr308 is part of the active site.

As to quaternary structure, homodimer. Mg(2+) is required as a cofactor.

The enzyme catalyses Endonucleolytic cleavage of DNA to give specific double-stranded fragments with terminal 5'-phosphates.. An E and P subtype restriction enzyme that recognizes the double-stranded sequence 5'-CCWGG-3' and cleaves before C-1. This Escherichia coli protein is Type II restriction enzyme EcoRII (ecoRIIR).